The chain runs to 88 residues: Small ribosomal subunit protein uS15c (88 aa).

Belongs to the universal ribosomal protein uS15 family. In terms of assembly, part of the 30S ribosomal subunit.

It is found in the plastid. It localises to the chloroplast. The sequence is that of Small ribosomal subunit protein uS15c (rps15) from Cycas taitungensis (Prince sago).